The sequence spans 295 residues: Aquaporin-9 (295 aa).

Topologically, residues 1–24 (MPSEKDRAKKNLVQRLALKSCLAK) are cytoplasmic. The chain crosses the membrane as a helical span at residues 25 to 43 (ETLSEFLGTFIMIVLGCGS). Residues 44 to 57 (IAQAVLSREKAGGI) are Extracellular-facing. A helical transmembrane segment spans residues 58-77 (ITINIGFATAVVMALYATFG). At 78 to 79 (VS) the chain is on the cytoplasmic side. An intramembrane region (discontinuously helical) is located at residues 80–92 (GGHINPAVSFAMC). Residues 84–86 (NPA) carry the NPA 1 motif. Residues 93 to 98 (TFGRME) lie on the Cytoplasmic side of the membrane. A helical membrane pass occupies residues 99-123 (WFKFPFYVGAQLLGAFVGAATVFGI). At 124 to 160 (YYDGLMAFADGKLLITGENGTAFIFATYPKPFVSVPG) the chain is on the extracellular side. Residues 161-178 (AFVDQVVSTMFLLLIVFA) form a helical membrane-spanning segment. At 179 to 190 (IFDSRNLGVPRG) the chain is on the cytoplasmic side. A helical transmembrane segment spans residues 191–207 (LEPIVIGLLIIVISCSL). The Extracellular portion of the chain corresponds to 208 to 210 (GLN). The segment at residues 211–225 (SGCAMNPARDLSPRL) is an intramembrane region (discontinuously helical). The NPA 2 motif lies at 216–218 (NPA). Residues 226–243 (FTALAGWGFEVFTFGNNF) lie on the Extracellular side of the membrane. The chain crosses the membrane as a helical span at residues 244–264 (WWIPVVGPMIGAVLGGLIYVL). Topologically, residues 265–295 (FIQMHHSNPDPEVKAEPAENNLEKHELSVIM) are cytoplasmic.

This sequence belongs to the MIP/aquaporin (TC 1.A.8) family. As to quaternary structure, homotetramer; each monomer provides an independent glycerol/water pore.

It is found in the cell membrane. It localises to the basolateral cell membrane. It carries out the reaction glycerol(in) = glycerol(out). It catalyses the reaction H2O(in) = H2O(out). The enzyme catalyses urea(in) = urea(out). The catalysed reaction is (S)-lactate(in) = (S)-lactate(out). It carries out the reaction NH4(+)(in) = NH4(+)(out). It catalyses the reaction uracil(in) = uracil(out). The enzyme catalyses adenine(out) = adenine(in). The catalysed reaction is 3-hydroxybutanoate(in) = 3-hydroxybutanoate(out). It carries out the reaction D-sorbitol(in) = D-sorbitol(out). It catalyses the reaction D-mannitol(in) = D-mannitol(out). The enzyme catalyses H2O2(out) = H2O2(in). The catalysed reaction is arsenite(in) = arsenite(out). It carries out the reaction selenite(in) = selenite(out). Aquaglyceroporins form homotetrameric transmembrane channels, with each monomer independently mediating glycerol and water transport across the plasma membrane along their osmotic gradient. AQP9 is the primary route for glycerol uptake in hepatocytes, supporting hepatic gluconeogenesis. It exhibits broad specificity and may transport various small, non-charged solutes, including carbamides, polyols, purines, and pyrimidines. AQP9 may also facilitate hepatic urea extrusion. Due to its permeability to lactate, AQP9 might participate in the astrocyte-to-neuron lactate shuttle, supplying neurons with energy. Additionally, AQP9 is permeable to arsenite, contributing to arsenic excretion by the liver and providing partial protection against arsenic toxicity. It is also permeable to H2O2 in vivo. Could also be permeable to ammonium. The sequence is that of Aquaporin-9 from Mus musculus (Mouse).